Consider the following 95-residue polypeptide: Cell division topological specificity factor (95 aa).

This sequence belongs to the MinE family.

Its function is as follows. Prevents the cell division inhibition by proteins MinC and MinD at internal division sites while permitting inhibition at polar sites. This ensures cell division at the proper site by restricting the formation of a division septum at the midpoint of the long axis of the cell. The polypeptide is Cell division topological specificity factor (Synechococcus sp. (strain CC9902)).